A 368-amino-acid polypeptide reads, in one-letter code: MRKYRIIISGGGTGGHIFPAISIANTFKKRFPDAEILFVGAEDRMEMDKVPAAGYKIVGLPVSGFDRAHLMNNVKVMVRLAKSLRLARKTIREFKPDIAVGVGGYASGPTLWMAASQGVPALIQEQNSYAGVTNKLLAKKASKICVAYEGMEKFFPADKIVITGNPVRQDLEEALSKKEEALAFFGLSPEKKTILVVGGSLGARTINRSIQGDLDKFFASDVQVIWQTGRYYYSDASKHLKAYRGMPVWCSDFITRMDYAYSAADLVISRAGASSISELCLLGKPVVLVPSPNVAEDHQTKNALALVHKDAAVMIADKDAEKDLVPTALKIVHDDERLCTLSRNIETLAQRHSADRIVDEIVKIIDKK.

UDP-N-acetyl-alpha-D-glucosamine is bound by residues 13–15 (TGG), Asn-127, Arg-168, Ser-200, Ile-254, and Gln-299.

The protein belongs to the glycosyltransferase 28 family. MurG subfamily.

Its subcellular location is the cell inner membrane. The catalysed reaction is di-trans,octa-cis-undecaprenyl diphospho-N-acetyl-alpha-D-muramoyl-L-alanyl-D-glutamyl-meso-2,6-diaminopimeloyl-D-alanyl-D-alanine + UDP-N-acetyl-alpha-D-glucosamine = di-trans,octa-cis-undecaprenyl diphospho-[N-acetyl-alpha-D-glucosaminyl-(1-&gt;4)]-N-acetyl-alpha-D-muramoyl-L-alanyl-D-glutamyl-meso-2,6-diaminopimeloyl-D-alanyl-D-alanine + UDP + H(+). It functions in the pathway cell wall biogenesis; peptidoglycan biosynthesis. Cell wall formation. Catalyzes the transfer of a GlcNAc subunit on undecaprenyl-pyrophosphoryl-MurNAc-pentapeptide (lipid intermediate I) to form undecaprenyl-pyrophosphoryl-MurNAc-(pentapeptide)GlcNAc (lipid intermediate II). The protein is UDP-N-acetylglucosamine--N-acetylmuramyl-(pentapeptide) pyrophosphoryl-undecaprenol N-acetylglucosamine transferase of Parabacteroides distasonis (strain ATCC 8503 / DSM 20701 / CIP 104284 / JCM 5825 / NCTC 11152).